The following is a 121-amino-acid chain: Large ribosomal subunit protein uL18 (121 aa).

It belongs to the universal ribosomal protein uL18 family. Part of the 50S ribosomal subunit; part of the 5S rRNA/L5/L18/L25 subcomplex. Contacts the 5S and 23S rRNAs.

This is one of the proteins that bind and probably mediate the attachment of the 5S RNA into the large ribosomal subunit, where it forms part of the central protuberance. The sequence is that of Large ribosomal subunit protein uL18 from Burkholderia mallei (strain NCTC 10247).